Here is a 339-residue protein sequence, read N- to C-terminus: D-erythrose-4-phosphate dehydrogenase (339 aa).

12-13 (RI) lines the NAD(+) pocket. Substrate-binding positions include 154-156 (SCT), arginine 200, 213-214 (TK), and arginine 236. The active-site Nucleophile is the cysteine 155. An NAD(+)-binding site is contributed by asparagine 318.

It belongs to the glyceraldehyde-3-phosphate dehydrogenase family. Epd subfamily. Homotetramer.

The protein localises to the cytoplasm. The catalysed reaction is D-erythrose 4-phosphate + NAD(+) + H2O = 4-phospho-D-erythronate + NADH + 2 H(+). It participates in cofactor biosynthesis; pyridoxine 5'-phosphate biosynthesis; pyridoxine 5'-phosphate from D-erythrose 4-phosphate: step 1/5. Catalyzes the NAD-dependent conversion of D-erythrose 4-phosphate to 4-phosphoerythronate. The polypeptide is D-erythrose-4-phosphate dehydrogenase (Enterobacter sp. (strain 638)).